The chain runs to 346 residues: Histone H1.8 (346 aa).

2 stretches are compositionally biased toward low complexity: residues 1 to 23 (MAPGSVTSDISPSSTSTAGSSRS) and 38 to 48 (PGGPSHSSLPV). Disordered regions lie at residues 1–50 (MAPG…PVGR) and 121–346 (ATGS…RAEA). Residues 51 to 129 (RHPPVLRMVL…GATGSFKLVP (79 aa)) enclose the H15 domain. The segment covering 128 to 137 (VPKHKKKIQP) has biased composition (basic residues). A compositionally biased stretch (basic and acidic residues) spans 148-167 (RAGEAKGKGPKKPSEAKEDP). Positions 164 to 179 (KEDPPNVGKVKKAAKR) match the Nuclear localization signal motif. Basic residues predominate over residues 172–182 (KVKKAAKRPAK). Basic and acidic residues-rich tracts occupy residues 205–225 (KDTRAQSGEARKVPPKPDKAM) and 251–262 (EAYRKTKAESKS). Residues 278 to 288 (TKKKVVAKAKA) are compositionally biased toward basic residues. Low complexity predominate over residues 298–309 (KAAAPAKGSGSK). Residues 334 to 346 (ASSSKVSSQRAEA) show a composition bias toward polar residues.

This sequence belongs to the histone H1/H5 family. As to expression, oocyte-specific.

The protein localises to the cytoplasm. It is found in the nucleus. Its subcellular location is the chromosome. May play a key role in the control of gene expression during oogenesis and early embryogenesis, presumably through the perturbation of chromatin structure. Essential for meiotic maturation of germinal vesicle-stage oocytes. The somatic type linker histone H1c is rapidly replaced by H1oo in a donor nucleus transplanted into an oocyte. The greater mobility of H1oo as compared to H1c may contribute to this rapid replacement and increased instability of the embryonic chromatin structure. The rapid replacement of H1c with H1oo may play an important role in nuclear remodeling. This chain is Histone H1.8, found in Homo sapiens (Human).